We begin with the raw amino-acid sequence, 150 residues long: Avidin-related protein 1 (150 aa).

The signal sequence occupies residues 1-24; the sequence is MVHATSPLLLLLLLSLALVAPGLS. Residues 26-147 form the Avidin-like domain; it reads RKCSLTGKWD…GNNDFTRQRT (122 aa). C28 and C105 form a disulfide bridge. Residues N36 and S40 each coordinate biotin. N54 carries an N-linked (GlcNAc...) asparagine glycan. Biotin is bound by residues Y57, T59, and D63. N67 and N93 each carry an N-linked (GlcNAc...) asparagine glycan. Residues S95, S99, and N140 each coordinate biotin.

This sequence belongs to the avidin/streptavidin family. Homotetramer. In terms of processing, glycosylated.

It localises to the secreted. In terms of biological role, forms a strong non-covalent specific complex with biotin. The chain is Avidin-related protein 1 (AVR1) from Gallus gallus (Chicken).